Reading from the N-terminus, the 382-residue chain is Neuropeptide Y receptor type 2 (382 aa).

The tract at residues 1 to 39 (MGPIGAEADENQTVEEMKMEPSGPGHTTPRGELAPDSEP) is disordered. Over 1–46 (MGPIGAEADENQTVEEMKMEPSGPGHTTPRGELAPDSEPELKDSTK) the chain is Extracellular. N-linked (GlcNAc...) asparagine glycosylation is present at N11. A helical transmembrane segment spans residues 47-67 (LIEVQIILILAYCSIILLGVV). The Cytoplasmic portion of the chain corresponds to 68–87 (GNSLVIHVVIKFKSMRTVTN). The chain crosses the membrane as a helical span at residues 88–108 (FFIANLAVADLLVNTLCLPFT). The Extracellular portion of the chain corresponds to 109–125 (LTYTLMGEWKMGPVLCH). A disulfide bridge connects residues C124 and C204. A helical transmembrane segment spans residues 126-146 (LVPYAQGLAVQVSTITLTVIA). Residues 147–166 (LDRHRCIVYHLESKISKRIS) lie on the Cytoplasmic side of the membrane. A helical transmembrane segment spans residues 167–187 (FLIIGLAWGISALLASPLAIF). The Extracellular segment spans residues 188 to 217 (REYSLIEIIPDFEIVACTEKWPGEEKSIYG). A helical transmembrane segment spans residues 218–238 (TVYSLSSLLILYVLPLGIISF). The Cytoplasmic segment spans residues 239 to 269 (SYARIWSKLKNHVSPGGVNDHYHQRRQKTTK). A helical membrane pass occupies residues 270–290 (MLVCVVVVFAVSWLPLHAFQL). Residues 291 to 305 (AVDIDSQVLDLKEYK) lie on the Extracellular side of the membrane. Residues 306–326 (LIFTVFHIIAMCSTFANPLLY) traverse the membrane as a helical segment. The Cytoplasmic portion of the chain corresponds to 327–382 (GWMNSNYRKAFLSAFRCEQRLDAIHSEVSMTSKAKKNLEATKNGGPDDSFTEATNV). A lipid anchor (S-palmitoyl cysteine) is attached at C343. Residues 363–382 (NLEATKNGGPDDSFTEATNV) form a disordered region.

It belongs to the G-protein coupled receptor 1 family.

The protein localises to the cell membrane. In terms of biological role, receptor for neuropeptide Y and peptide YY. In Sus scrofa (Pig), this protein is Neuropeptide Y receptor type 2 (NPY2R).